Here is a 426-residue protein sequence, read N- to C-terminus: 3-phosphoshikimate 1-carboxyvinyltransferase (426 aa).

Residues lysine 20, serine 21, and arginine 25 each contribute to the 3-phosphoshikimate site. Lysine 20 lines the phosphoenolpyruvate pocket. Glycine 92 and arginine 120 together coordinate phosphoenolpyruvate. 4 residues coordinate 3-phosphoshikimate: serine 165, glutamine 167, aspartate 313, and lysine 340. A phosphoenolpyruvate-binding site is contributed by glutamine 167. The Proton acceptor role is filled by aspartate 313. Arginine 344 and arginine 386 together coordinate phosphoenolpyruvate.

This sequence belongs to the EPSP synthase family. In terms of assembly, monomer.

The protein resides in the cytoplasm. It catalyses the reaction 3-phosphoshikimate + phosphoenolpyruvate = 5-O-(1-carboxyvinyl)-3-phosphoshikimate + phosphate. Its pathway is metabolic intermediate biosynthesis; chorismate biosynthesis; chorismate from D-erythrose 4-phosphate and phosphoenolpyruvate: step 6/7. Its function is as follows. Catalyzes the transfer of the enolpyruvyl moiety of phosphoenolpyruvate (PEP) to the 5-hydroxyl of shikimate-3-phosphate (S3P) to produce enolpyruvyl shikimate-3-phosphate and inorganic phosphate. This is 3-phosphoshikimate 1-carboxyvinyltransferase from Brevibacillus brevis (strain 47 / JCM 6285 / NBRC 100599).